A 488-amino-acid polypeptide reads, in one-letter code: Cytochrome P450 monooxygenase orf2 (488 aa).

The helical transmembrane segment at 7–27 threads the bilayer; it reads LPGIFLPLAGCVLALSLTTIV. Residue cysteine 432 coordinates heme.

The protein belongs to the cytochrome P450 family. It depends on heme as a cofactor.

It is found in the membrane. It participates in secondary metabolite biosynthesis. In terms of biological role, cytochrome P450 monooxygenase; part of the gene cluster that mediates the biosynthesis of nigerpyrone and its derivatives carbonarone A and pestalamide A. The biosynthesis pathway begins with the polyketide assembly by epaA to form phenylacetyl triketide precursor from successive condensation of two malonyl-CoA, presumably with one phenylacetyl-CoA starter unit produced by the phenylacetyl-CoA ligase epaB. For the nigerpyrone biosynthesis, the reactive polyketide chain is released as an aldehyde through the R-domain. A nonenzymatic cyclization and dehydration may create nigerpyrone. For the biosynthesis of carbonarone A and pestalamide A, an extra methyl group is added through the C-methyltransferase domain. Several further steps involving the dehydrogenase orf1, the cytochrome P450 monooxygenase orf2 and the FAD-dependent monooxygenase orf3 are required to form a carbonarone A precursor which is converted to carbonarone A via cyclization. The O-acetyltransferase epaC could catalyze the transfer of 2-methylsuccinyl-CoA, a common intermediate in the ethylmalonyl-CoA pathway, to generate the final product pestalamide A. This chain is Cytochrome P450 monooxygenase orf2, found in Aspergillus niger (strain ATCC MYA-4892 / CBS 513.88 / FGSC A1513).